The following is a 41-amino-acid chain: Large ribosomal subunit protein bL36B (41 aa).

This sequence belongs to the bacterial ribosomal protein bL36 family.

In Vibrio campbellii (strain ATCC BAA-1116), this protein is Large ribosomal subunit protein bL36B.